The primary structure comprises 248 residues: 1-(5-phosphoribosyl)-5-[(5-phosphoribosylamino)methylideneamino] imidazole-4-carboxamide isomerase (248 aa).

D7 acts as the Proton acceptor in catalysis. The active-site Proton donor is D129.

This sequence belongs to the HisA/HisF family.

The protein resides in the cytoplasm. The catalysed reaction is 1-(5-phospho-beta-D-ribosyl)-5-[(5-phospho-beta-D-ribosylamino)methylideneamino]imidazole-4-carboxamide = 5-[(5-phospho-1-deoxy-D-ribulos-1-ylimino)methylamino]-1-(5-phospho-beta-D-ribosyl)imidazole-4-carboxamide. Its pathway is amino-acid biosynthesis; L-histidine biosynthesis; L-histidine from 5-phospho-alpha-D-ribose 1-diphosphate: step 4/9. This Aeromonas salmonicida (strain A449) protein is 1-(5-phosphoribosyl)-5-[(5-phosphoribosylamino)methylideneamino] imidazole-4-carboxamide isomerase.